An 879-amino-acid polypeptide reads, in one-letter code: Alanine--tRNA ligase (879 aa).

Residues His566, His570, Cys668, and His672 each contribute to the Zn(2+) site.

The protein belongs to the class-II aminoacyl-tRNA synthetase family. Requires Zn(2+) as cofactor.

The protein resides in the cytoplasm. It carries out the reaction tRNA(Ala) + L-alanine + ATP = L-alanyl-tRNA(Ala) + AMP + diphosphate. In terms of biological role, catalyzes the attachment of alanine to tRNA(Ala) in a two-step reaction: alanine is first activated by ATP to form Ala-AMP and then transferred to the acceptor end of tRNA(Ala). Also edits incorrectly charged Ser-tRNA(Ala) and Gly-tRNA(Ala) via its editing domain. This is Alanine--tRNA ligase from Halalkalibacterium halodurans (strain ATCC BAA-125 / DSM 18197 / FERM 7344 / JCM 9153 / C-125) (Bacillus halodurans).